A 424-amino-acid chain; its full sequence is CUGBP Elav-like family member 4 (424 aa).

Residues 8–27 (VANGQPDNSSLSSNPTGHMN) form a disordered region. A compositionally biased stretch (polar residues) spans 9–24 (ANGQPDNSSLSSNPTG). RRM domains follow at residues 47–128 (IKLF…PADS) and 342–417 (PQPP…LKRP).

Belongs to the CELF/BRUNOL family.

It is found in the nucleus. It localises to the cytoplasm. RNA-binding protein that may be implicated in the regulation of pre-mRNA alternative splicing. The sequence is that of CUGBP Elav-like family member 4 (celf4) from Xenopus tropicalis (Western clawed frog).